Consider the following 254-residue polypeptide: Very-long-chain (3R)-3-hydroxyacyl-CoA dehydratase 2 (254 aa).

Alanine 2 is modified (N-acetylalanine). Residues alanine 2–tyrosine 41 lie on the Cytoplasmic side of the membrane. Residues lysine 11–glycine 33 are disordered. Residues glycine 12–glycine 21 show a composition bias toward gly residues. Residues leucine 42–leucine 60 traverse the membrane as a helical segment. Topologically, residues valine 61–lysine 79 are lumenal. Residues proline 80–isoleucine 97 form a helical membrane-spanning segment. Over glycine 98 to threonine 107 the chain is Cytoplasmic. A helical transmembrane segment spans residues serine 108–valine 125. The Lumenal portion of the chain corresponds to lysine 126 to serine 130. The helical transmembrane segment at glutamate 131 to isoleucine 146 threads the bilayer. Residues isoleucine 147–tyrosine 169 lie on the Cytoplasmic side of the membrane. A helical membrane pass occupies residues threonine 170 to isoleucine 187. Residues tyrosine 176 and glutamate 183 contribute to the active site. Residues tyrosine 188–phenylalanine 217 are Lumenal-facing. The tract at residues glycine 198 to tyrosine 214 is may be involved in interaction with TECR. N-linked (GlcNAc...) asparagine glycosylation occurs at asparagine 209. Residues leucine 218–histidine 235 traverse the membrane as a helical segment. The Cytoplasmic segment spans residues methionine 236 to glutamate 254.

It belongs to the very long-chain fatty acids dehydratase HACD family. As to quaternary structure, may interact with enzymes of the ELO family (including ELOVL1); with those enzymes that mediate condensation, the first of the four steps of the reaction cycle responsible for fatty acids elongation, may be part of a larger fatty acids elongase complex. Interacts with BCAP31. Interacts (via the third lumenal loop) with TECR. As to expression, highly expressed in testis, spleen, prostate, colon and heart, followed by moderate expression in thymus, ovary, small intestine, peripheral blood leukocytes, liver, skeletal muscle and pancreas. Weakly detected in kidney, placenta, brain and lung.

The protein localises to the endoplasmic reticulum membrane. The enzyme catalyses a very-long-chain (3R)-3-hydroxyacyl-CoA = a very-long-chain (2E)-enoyl-CoA + H2O. It carries out the reaction (3R)-hydroxyhexadecanoyl-CoA = (2E)-hexadecenoyl-CoA + H2O. It catalyses the reaction (3R)-hydroxyoctadecanoyl-CoA = (2E)-octadecenoyl-CoA + H2O. The catalysed reaction is (3R)-hydroxyeicosanoyl-CoA = (2E)-eicosenoyl-CoA + H2O. The enzyme catalyses (3R)-hydroxydocosanoyl-CoA = (2E)-docosenoyl-CoA + H2O. It carries out the reaction (3R)-hydroxytetracosanoyl-CoA = (2E)-tetracosenoyl-CoA + H2O. It catalyses the reaction (3R)-hydroxyhexacosanoyl-CoA = (2E)-hexacosenoyl-CoA + H2O. Its pathway is lipid metabolism; fatty acid biosynthesis. Its function is as follows. Catalyzes the third of the very long-chain fatty acids (VLCFA) elongation four-step cycle (condensation, reduction, dehydration, and reduction). This endoplasmic reticulum-elongation process is characterized by the addition of two carbons to the lipid chain through each cycle. This enzyme catalyzes the dehydration of the 3-hydroxyacyl-CoA intermediate into trans-2,3-enoyl-CoA, within each cycle of elongation. Therefore, it participates in the production of various VLCFAs involved in multiple biological processes as precursors of membrane lipids and lipid mediators. The protein is Very-long-chain (3R)-3-hydroxyacyl-CoA dehydratase 2 of Homo sapiens (Human).